We begin with the raw amino-acid sequence, 268 residues long: 18S rRNA (guanine-N(7))-methyltransferase bud23 (268 aa).

A disordered region spans residues 246–268; that stretch reads RKRGRLHVPKDSKYSGRRRKAAF.

It belongs to the class I-like SAM-binding methyltransferase superfamily. BUD23/WBSCR22 family.

The protein resides in the cytoplasm. It localises to the nucleus. It carries out the reaction a guanosine in 18S rRNA + S-adenosyl-L-methionine = an N(7)-methylguanosine in 18S rRNA + S-adenosyl-L-homocysteine. Functionally, S-adenosyl-L-methionine-dependent methyltransferase that specifically methylates the N(7) position of a guanine in 18S rRNA. Important for biogenesis end export of the 40S ribosomal subunit independent on its methyltransferase activity. The chain is 18S rRNA (guanine-N(7))-methyltransferase bud23 (bud23) from Schizosaccharomyces pombe (strain 972 / ATCC 24843) (Fission yeast).